Consider the following 218-residue polypeptide: Histone H1 (218 aa).

Low complexity-rich tracts occupy residues 1–19 (MSET…GAKA) and 27–39 (AAGG…PAGP). 2 disordered regions span residues 1 to 41 (MSET…GPSV) and 89 to 218 (VGKG…PKKK). Ser2 is subject to N-acetylserine. The 74-residue stretch at 37-110 (AGPSVTELIT…GASGSFKLNK (74 aa)) folds into the H15 domain. Basic residues-rich tracts occupy residues 119-133 (ATKK…KPAA), 141-158 (KKPK…KAKK), 166-184 (KAAK…KKAA), and 191-218 (KAVK…PKKK).

It belongs to the histone H1/H5 family.

The protein localises to the nucleus. The protein resides in the chromosome. Histones H1 are necessary for the condensation of nucleosome chains into higher-order structures. The sequence is that of Histone H1 from Anas platyrhynchos (Mallard).